The sequence spans 114 residues: Large ribosomal subunit protein bL20c (114 aa).

Belongs to the bacterial ribosomal protein bL20 family.

The protein resides in the plastid. The protein localises to the chloroplast. Binds directly to 23S ribosomal RNA and is necessary for the in vitro assembly process of the 50S ribosomal subunit. It is not involved in the protein synthesizing functions of that subunit. This is Large ribosomal subunit protein bL20c from Psilotum nudum (Whisk fern).